The sequence spans 417 residues: NADH-quinone oxidoreductase subunit D (417 aa).

Belongs to the complex I 49 kDa subunit family. As to quaternary structure, NDH-1 is composed of 14 different subunits. Subunits NuoB, C, D, E, F, and G constitute the peripheral sector of the complex.

The protein localises to the cell inner membrane. It catalyses the reaction a quinone + NADH + 5 H(+)(in) = a quinol + NAD(+) + 4 H(+)(out). In terms of biological role, NDH-1 shuttles electrons from NADH, via FMN and iron-sulfur (Fe-S) centers, to quinones in the respiratory chain. The immediate electron acceptor for the enzyme in this species is believed to be ubiquinone. Couples the redox reaction to proton translocation (for every two electrons transferred, four hydrogen ions are translocated across the cytoplasmic membrane), and thus conserves the redox energy in a proton gradient. In Acidithiobacillus ferrooxidans (strain ATCC 53993 / BNL-5-31) (Leptospirillum ferrooxidans (ATCC 53993)), this protein is NADH-quinone oxidoreductase subunit D.